The chain runs to 151 residues: Cytochrome c-type biogenesis protein CcmE (151 aa).

Residues 1-8 are Cytoplasmic-facing; the sequence is MNPLRRKR. The helical; Signal-anchor for type II membrane protein transmembrane segment at 9 to 29 threads the bilayer; the sequence is LLIILAILVGVGVAVGLALSA. At 30–151 the chain is on the periplasmic side; that stretch reads LQQNINLFYT…QSAPTPAKEG (122 aa). Heme-binding residues include His124 and Tyr128.

It belongs to the CcmE/CycJ family.

It localises to the cell inner membrane. Its function is as follows. Heme chaperone required for the biogenesis of c-type cytochromes. Transiently binds heme delivered by CcmC and transfers the heme to apo-cytochromes in a process facilitated by CcmF and CcmH. In Pseudomonas fluorescens biotype C, this protein is Cytochrome c-type biogenesis protein CcmE.